Consider the following 153-residue polypeptide: Calmodulin-like protein 4 (153 aa).

EF-hand domains are found at residues 8 to 43 (DQIN…LGAS), 44 to 79 (PTPG…QIKQ), 81 to 116 (DPKK…LGEK), and 117 to 152 (LTHK…PVRD).

The protein belongs to the calmodulin family. Interacts with MYO7B; the interaction mediates the association of CALML4 with the IMAC/intermicrovillar adhesion complex. Interacts with MYO7A. As to expression, expressed in the small intestine, in both mature enterocytes on the villus surface and immature cells that reside in the crypt stem-cell niche.

It is found in the cell projection. It localises to the microvillus. In terms of biological role, as part of the intermicrovillar adhesion complex/IMAC plays a role in epithelial brush border differentiation, controlling microvilli organization and length. Acts as a light chain for MYO7B and is required for efficient targeting of the IMAC to the tips of border brush microvilli. This chain is Calmodulin-like protein 4 (Calml4), found in Mus musculus (Mouse).